Reading from the N-terminus, the 98-residue chain is NADH-ubiquinone oxidoreductase chain 4L (98 aa).

A run of 3 helical transmembrane segments spans residues 1 to 21, 29 to 49, and 61 to 81; these read MSLVYMNIMTAFMVSLAGLLM, SLLCLEGMMLSLFVLATLTIL, and IILLVFAACEAALGLSLLVMV.

It belongs to the complex I subunit 4L family. As to quaternary structure, core subunit of respiratory chain NADH dehydrogenase (Complex I) which is composed of 45 different subunits.

Its subcellular location is the mitochondrion inner membrane. The enzyme catalyses a ubiquinone + NADH + 5 H(+)(in) = a ubiquinol + NAD(+) + 4 H(+)(out). Functionally, core subunit of the mitochondrial membrane respiratory chain NADH dehydrogenase (Complex I) which catalyzes electron transfer from NADH through the respiratory chain, using ubiquinone as an electron acceptor. Part of the enzyme membrane arm which is embedded in the lipid bilayer and involved in proton translocation. This chain is NADH-ubiquinone oxidoreductase chain 4L (MT-ND4L), found in Muntiacus feae (Fea's muntjac).